The sequence spans 969 residues: RNA polymerase-associated protein RapA (969 aa).

One can recognise a Helicase ATP-binding domain in the interval 164-334 (EVGRRHAPRV…FARLRLLDPD (171 aa)). ATP is bound at residue 177–184 (DEVGLGKT). The DEAH box signature appears at 280-283 (DEAH). In terms of domain architecture, Helicase C-terminal spans 492 to 679 (RVNWLIEKIQ…ESAKLNQSLK (188 aa)).

Belongs to the SNF2/RAD54 helicase family. RapA subfamily. In terms of assembly, interacts with the RNAP. Has a higher affinity for the core RNAP than for the holoenzyme. Its ATPase activity is stimulated by binding to RNAP.

Its function is as follows. Transcription regulator that activates transcription by stimulating RNA polymerase (RNAP) recycling in case of stress conditions such as supercoiled DNA or high salt concentrations. Probably acts by releasing the RNAP, when it is trapped or immobilized on tightly supercoiled DNA. Does not activate transcription on linear DNA. Probably not involved in DNA repair. The protein is RNA polymerase-associated protein RapA of Vibrio atlanticus (strain LGP32) (Vibrio splendidus (strain Mel32)).